Here is a 527-residue protein sequence, read N- to C-terminus: tRNA (uracil(54)-C(5))-methyltransferase (527 aa).

Residues 107 to 167 (PFERFQEIEV…DTYALADFLE (61 aa)) enclose the TRAM domain. Residues Cys182, Cys188, Cys191, and Cys276 each coordinate [4Fe-4S] cluster. Gln347, Tyr383, Glu404, and Asp451 together coordinate S-adenosyl-L-methionine. Residue Cys478 is the Nucleophile of the active site. The active-site Proton acceptor is the Glu517.

The protein belongs to the class I-like SAM-binding methyltransferase superfamily. RNA M5U methyltransferase family.

The enzyme catalyses uridine(54) in tRNA + S-adenosyl-L-methionine = 5-methyluridine(54) in tRNA + S-adenosyl-L-homocysteine + H(+). In terms of biological role, catalyzes the formation of 5-methyl-uridine at position 54 (m5U54) in all tRNA. May also have a role in tRNA stabilization or maturation. This is tRNA (uracil(54)-C(5))-methyltransferase from Schizosaccharomyces pombe (strain 972 / ATCC 24843) (Fission yeast).